Here is a 133-residue protein sequence, read N- to C-terminus: Homeobox protein BarH-like 2 (133 aa).

Positions 1-46 (ELEKEFQKQKYLSTPDRLDLAQSLGLTQLQVKTWYQNRRMKWKKMV) form a DNA-binding region, homeobox. A disordered region spans residues 45-133 (MVLKGGQEAP…VTSPEPPPSS (89 aa)).

This sequence belongs to the BAR homeobox family. In terms of tissue distribution, expressed in keratinizing epithelia such as wool follicle, tongue and esophagus. Expressed at low level in thymus. Not detected in spleen, skeletal muscle, brain, heart kidney, liver and lung.

The protein localises to the nucleus. In terms of biological role, transcription factor. Binds optimally to the DNA consensus sequence 5'-YYTAATGRTTTTY-3'. May control the expression of neural adhesion molecules such as L1 or Ng-CAM during embryonic development of both the central and peripherical nervous system. May be involved in controlling adhesive processes in keratinizing epithelia. The sequence is that of Homeobox protein BarH-like 2 (BARX2) from Ovis aries (Sheep).